The sequence spans 1140 residues: Receptor-type guanylate cyclase gcy-3 (1140 aa).

The N-terminal stretch at 1-21 (MKNVFQLLIPLFFHLFSLVSL) is a signal peptide. The Extracellular portion of the chain corresponds to 22-495 (QNIPVSTGTT…CPLPFWEQYG (474 aa)). 7 N-linked (GlcNAc...) asparagine glycosylation sites follow: N220, N301, N349, N385, N418, N441, and N459. The helical transmembrane segment at 496–516 (ILIFVGAGVFLIMITTNLICF) threads the bilayer. Over 517-1140 (LFMIKNRREE…RQYKMDTLKI (624 aa)) the chain is Cytoplasmic. The 289-residue stretch at 538–826 (FVKLRELERK…NICEQLRDLM (289 aa)) folds into the Protein kinase domain. ATP-binding positions include 544–552 (LERKSKGTS) and K582. The Guanylate cyclase domain maps to 897-1027 (TVFFSDVVKF…DTVNTASRME (131 aa)). The disordered stretch occupies residues 1083–1140 (PSISNRSTPPVTQERFTVRAPDTPEARSVSSHGSRPSSNHNNNNDPLYRQYKMDTLKI). Residues 1084–1097 (SISNRSTPPVTQER) show a composition bias toward polar residues. Residues 1109–1126 (RSVSSHGSRPSSNHNNNN) are compositionally biased toward low complexity.

Belongs to the adenylyl cyclase class-4/guanylyl cyclase family. As to expression, expressed asymmetrically in ASE right (ASER) sensory neuron and bilaterally in ASI sensory neurons. Expressed in PVT interneuron.

The protein resides in the cell membrane. It carries out the reaction GTP = 3',5'-cyclic GMP + diphosphate. In terms of biological role, guanylate cyclase involved in the production of the second messenger cGMP. This chain is Receptor-type guanylate cyclase gcy-3, found in Caenorhabditis elegans.